Here is a 119-residue protein sequence, read N- to C-terminus: Large ribosomal subunit protein bL20 (119 aa).

It belongs to the bacterial ribosomal protein bL20 family.

Functionally, binds directly to 23S ribosomal RNA and is necessary for the in vitro assembly process of the 50S ribosomal subunit. It is not involved in the protein synthesizing functions of that subunit. The sequence is that of Large ribosomal subunit protein bL20 from Listeria innocua serovar 6a (strain ATCC BAA-680 / CLIP 11262).